An 80-amino-acid polypeptide reads, in one-letter code: Styelin-C (80 aa).

The N-terminal stretch at 1-22 is a signal peptide; sequence MQMKATILIVLVALFMIQQSEA. Trp-24 carries the 6'-bromotryptophan modification. Leucine amide is present on Leu-53. The propeptide at 55-80 is removed in mature form; the sequence is DMTDEEFQEFMQDIEQAREEELLSRQ.

It localises to the secreted. Functionally, bactericidal against several Gram-positive and Gram-negative bacteria. This is Styelin-C from Styela clava (Sea squirt).